The chain runs to 264 residues: 3-methyl-2-oxobutanoate hydroxymethyltransferase (264 aa).

The Mg(2+) site is built by Asp-45 and Asp-84. Residues 45–46 (DS), Asp-84, and Lys-112 each bind 3-methyl-2-oxobutanoate. Position 114 (Glu-114) interacts with Mg(2+). Residue Glu-181 is the Proton acceptor of the active site.

The protein belongs to the PanB family. In terms of assembly, homodecamer; pentamer of dimers. The cofactor is Mg(2+).

It localises to the cytoplasm. The catalysed reaction is 3-methyl-2-oxobutanoate + (6R)-5,10-methylene-5,6,7,8-tetrahydrofolate + H2O = 2-dehydropantoate + (6S)-5,6,7,8-tetrahydrofolate. It participates in cofactor biosynthesis; (R)-pantothenate biosynthesis; (R)-pantoate from 3-methyl-2-oxobutanoate: step 1/2. Functionally, catalyzes the reversible reaction in which hydroxymethyl group from 5,10-methylenetetrahydrofolate is transferred onto alpha-ketoisovalerate to form ketopantoate. The protein is 3-methyl-2-oxobutanoate hydroxymethyltransferase of Shewanella amazonensis (strain ATCC BAA-1098 / SB2B).